The chain runs to 70 residues: Small ribosomal subunit protein bS21 (70 aa).

The protein belongs to the bacterial ribosomal protein bS21 family.

This is Small ribosomal subunit protein bS21 from Laribacter hongkongensis (strain HLHK9).